The sequence spans 433 residues: Enolase (433 aa).

A (2R)-2-phosphoglycerate-binding site is contributed by Gln-167. The Proton donor role is filled by Glu-209. The Mg(2+) site is built by Asp-246, Glu-291, and Asp-318. Lys-326 bears the N6-acetyllysine mark. Residues Lys-343, Arg-372, Ser-373, and Lys-394 each contribute to the (2R)-2-phosphoglycerate site. The Proton acceptor role is filled by Lys-343. The residue at position 343 (Lys-343) is an N6-(2-hydroxyisobutyryl)lysine.

This sequence belongs to the enolase family. Component of the RNA degradosome, a multiprotein complex involved in RNA processing and mRNA degradation. The cofactor is Mg(2+). In terms of processing, acetylated and 2-hydroxyisobutyrylated at Lys-326 and Lys-343, respectively, reducing the enolase activity. Deacetylated and de-2-hydroxyisobutyrylated by NpdA/CobB, increasing the enolase activity.

The protein resides in the cytoplasm. Its subcellular location is the secreted. It is found in the cell surface. It catalyses the reaction (2R)-2-phosphoglycerate = phosphoenolpyruvate + H2O. The protein operates within carbohydrate degradation; glycolysis; pyruvate from D-glyceraldehyde 3-phosphate: step 4/5. Its function is as follows. Catalyzes the reversible conversion of 2-phosphoglycerate (2-PG) into phosphoenolpyruvate (PEP). It is essential for the degradation of carbohydrates via glycolysis. This is Enolase from Proteus mirabilis (strain HI4320).